The chain runs to 491 residues: Proline-rich protein PRCC (491 aa).

Residues 1 to 100 (MSLVAYASSD…PPPPGVSPAE (100 aa)) form a mediates interaction with MAD2L2 region. Disordered stretches follow at residues 1 to 244 (MSLV…SPSA), 260 to 313 (ITQE…PAFQ), and 432 to 454 (EEKT…QRRK). Acidic residues predominate over residues 10-26 (DESEPDEAEPEPEEEEA). Positions 40–49 (ASLPAPKGPA) are enriched in low complexity. Pro residues predominate over residues 50–96 (LLPPPPQMLAPAFPPPLLLPPPTGDPRLQPPPPLPFGLGGFPPPPGV). Phosphoserine occurs at positions 97, 114, 157, 159, 212, and 218. Low complexity predominate over residues 111–120 (GLPSPRGPGL). Residues 230–244 (APVVGTTTTTPSPSA) show a composition bias toward low complexity. Residue threonine 239 is modified to Phosphothreonine. 2 positions are modified to phosphoserine: serine 241 and serine 267. The span at 262 to 272 (QEEDDSDEEVA) shows a compositional bias: acidic residues. Residues 287–307 (GVEPYPYPIPTVPEELPPGTE) are compositionally biased toward pro residues.

Interacts with MAD2L2; the interaction is direct. Ubiquitous in fetal and adult tissues.

The protein resides in the nucleus. May regulate cell cycle progression through interaction with MAD2L2. This chain is Proline-rich protein PRCC (PRCC), found in Homo sapiens (Human).